We begin with the raw amino-acid sequence, 248 residues long: 1-(5-phosphoribosyl)-5-[(5-phosphoribosylamino)methylideneamino] imidazole-4-carboxamide isomerase (248 aa).

Aspartate 8 functions as the Proton acceptor in the catalytic mechanism. Catalysis depends on aspartate 131, which acts as the Proton donor.

Belongs to the HisA/HisF family.

It localises to the cytoplasm. The catalysed reaction is 1-(5-phospho-beta-D-ribosyl)-5-[(5-phospho-beta-D-ribosylamino)methylideneamino]imidazole-4-carboxamide = 5-[(5-phospho-1-deoxy-D-ribulos-1-ylimino)methylamino]-1-(5-phospho-beta-D-ribosyl)imidazole-4-carboxamide. It functions in the pathway amino-acid biosynthesis; L-histidine biosynthesis; L-histidine from 5-phospho-alpha-D-ribose 1-diphosphate: step 4/9. The chain is 1-(5-phosphoribosyl)-5-[(5-phosphoribosylamino)methylideneamino] imidazole-4-carboxamide isomerase from Cupriavidus taiwanensis (strain DSM 17343 / BCRC 17206 / CCUG 44338 / CIP 107171 / LMG 19424 / R1) (Ralstonia taiwanensis (strain LMG 19424)).